The sequence spans 176 residues: Inner membrane-spanning protein YciB (176 aa).

The next 5 membrane-spanning stretches (helical) occupy residues 23–43, 50–70, 74–94, 119–139, and 150–170; these read MIAATAVALVAGVVQAAFLYW, TMQWVGLVLIVVFGGATIVLG, FIMWKPSVLFWLGALFLWGSH, LTYMWVGFLIFMGIANWFVFT, and MFGSTALMLVFFIIQGIYLST.

This sequence belongs to the YciB family.

The protein resides in the cell inner membrane. Functionally, plays a role in cell envelope biogenesis, maintenance of cell envelope integrity and membrane homeostasis. The protein is Inner membrane-spanning protein YciB of Neisseria meningitidis serogroup A / serotype 4A (strain DSM 15465 / Z2491).